Here is a 476-residue protein sequence, read N- to C-terminus: Glutamate--tRNA ligase (476 aa).

Positions 9 to 19 (PSPTGTLHLGT) match the 'HIGH' region motif. The 'KMSKS' region signature appears at 248–252 (KLSKR). Lysine 251 is an ATP binding site.

This sequence belongs to the class-I aminoacyl-tRNA synthetase family. Glutamate--tRNA ligase type 1 subfamily. Monomer.

The protein resides in the cytoplasm. It carries out the reaction tRNA(Glu) + L-glutamate + ATP = L-glutamyl-tRNA(Glu) + AMP + diphosphate. In terms of biological role, catalyzes the attachment of glutamate to tRNA(Glu) in a two-step reaction: glutamate is first activated by ATP to form Glu-AMP and then transferred to the acceptor end of tRNA(Glu). This is Glutamate--tRNA ligase from Prochlorococcus marinus (strain NATL2A).